The chain runs to 238 residues: Ribosomal RNA small subunit methyltransferase I (238 aa).

This sequence belongs to the methyltransferase superfamily. RsmI family.

The protein resides in the cytoplasm. It catalyses the reaction cytidine(1402) in 16S rRNA + S-adenosyl-L-methionine = 2'-O-methylcytidine(1402) in 16S rRNA + S-adenosyl-L-homocysteine + H(+). Its function is as follows. Catalyzes the 2'-O-methylation of the ribose of cytidine 1402 (C1402) in 16S rRNA. The chain is Ribosomal RNA small subunit methyltransferase I from Mesomycoplasma conjunctivae (strain ATCC 25834 / NCTC 10147 / HRC/581) (Mycoplasma conjunctivae).